The chain runs to 279 residues: HTH-type transcriptional regulator HdfR (279 aa).

The region spanning 1 to 58 (MDTELLKTFLEVSRTRHFGRAAESLYLTQSAVSFRIRQLENQLGVNLFTRHRNNIRLT) is the HTH lysR-type domain. The segment at residues 18–37 (FGRAAESLYLTQSAVSFRIR) is a DNA-binding region (H-T-H motif).

It belongs to the LysR transcriptional regulatory family.

In terms of biological role, negatively regulates the transcription of the flagellar master operon flhDC by binding to the upstream region of the operon. The protein is HTH-type transcriptional regulator HdfR of Escherichia coli O7:K1 (strain IAI39 / ExPEC).